A 339-amino-acid polypeptide reads, in one-letter code: Lipoate-protein ligase A (339 aa).

Residues 29–216 (DPSQQVLFLW…SFENFYAGKA (188 aa)) form the BPL/LPL catalytic domain. ATP-binding positions include arginine 71, 76 to 79 (GAVF), and lysine 134. Residue lysine 134 coordinates (R)-lipoate.

The protein belongs to the LplA family. As to quaternary structure, monomer.

The protein resides in the cytoplasm. The enzyme catalyses L-lysyl-[lipoyl-carrier protein] + (R)-lipoate + ATP = N(6)-[(R)-lipoyl]-L-lysyl-[lipoyl-carrier protein] + AMP + diphosphate + H(+). The protein operates within protein modification; protein lipoylation via exogenous pathway; protein N(6)-(lipoyl)lysine from lipoate: step 1/2. It functions in the pathway protein modification; protein lipoylation via exogenous pathway; protein N(6)-(lipoyl)lysine from lipoate: step 2/2. Functionally, catalyzes both the ATP-dependent activation of exogenously supplied lipoate to lipoyl-AMP and the transfer of the activated lipoyl onto the lipoyl domains of lipoate-dependent enzymes. In Bdellovibrio bacteriovorus (strain ATCC 15356 / DSM 50701 / NCIMB 9529 / HD100), this protein is Lipoate-protein ligase A.